Reading from the N-terminus, the 352-residue chain is Speedy protein E18 (352 aa).

Basic residues predominate over residues 1–12 (MDRTKTRFRKRG). The segment at 1-90 (MDRTKTRFRK…EPEKELAPEP (90 aa)) is disordered. Over residues 16–39 (GKITTSRQPHPQNEQSLQRSTSGY) the composition is skewed to polar residues. The span at 76–90 (DESEEEPEKELAPEP) shows a compositional bias: acidic residues.

It belongs to the Speedy/Ringo family.

This Homo sapiens (Human) protein is Speedy protein E18.